We begin with the raw amino-acid sequence, 113 residues long: U11-theraphotoxin-Hhn1s (113 aa).

The signal sequence occupies residues 1–21 (MNTVRVTFLLVFVLAVSLGQA). Positions 22–74 (DKDENRMEMQEKTEQGKSYLDFAENLLLQKLEELEAKLLEEDSEESRNSRQKR) are excised as a propeptide. Residues 61–83 (EEDSEESRNSRQKRCIGEGVPCD) are disordered. Disulfide bonds link Cys-75–Cys-90, Cys-82–Cys-95, and Cys-89–Cys-110.

The protein belongs to the neurotoxin 14 (magi-1) family. 01 (HNTX-16) subfamily. As to expression, expressed by the venom gland.

Its subcellular location is the secreted. Functionally, probable ion channel inhibitor. The polypeptide is U11-theraphotoxin-Hhn1s (Cyriopagopus hainanus (Chinese bird spider)).